A 432-amino-acid polypeptide reads, in one-letter code: CinA-like protein (432 aa).

This sequence belongs to the CinA family.

In Colwellia psychrerythraea (strain 34H / ATCC BAA-681) (Vibrio psychroerythus), this protein is CinA-like protein.